The following is a 312-amino-acid chain: Deoxyribonuclease-1-like 1 (312 aa).

A signal peptide spans 1 to 35 (MPSGQPVFPRRVPDAYIAMRGLVVASLLILLVGGT). N-linked (GlcNAc...) asparagine glycosylation is present at Asn-102. Glu-113 is a catalytic residue. A glycan (N-linked (GlcNAc...) asparagine) is linked at Asn-133. His-164 is an active-site residue. Cysteines 203 and 240 form a disulfide. Asn-239 carries N-linked (GlcNAc...) asparagine glycosylation.

This sequence belongs to the DNase I family.

It is found in the endoplasmic reticulum. The protein is Deoxyribonuclease-1-like 1 (Dnase1l1) of Rattus norvegicus (Rat).